Reading from the N-terminus, the 738-residue chain is Interleukin-12 receptor subunit beta-1 (738 aa).

The first 19 residues, 1-19 (MDMMGLAGTSKHITFLLLC), serve as a signal peptide directing secretion. Residues 20-565 (QLGASGPGDG…QRFSFEVQIS (546 aa)) are Extracellular-facing. 5 consecutive Fibronectin type-III domains span residues 47 to 152 (GPRN…TPPL), 152 to 258 (LGHI…PEVL), 259 to 359 (PQAK…LPAQ), 360 to 465 (ELTE…GNAS), and 469 to 565 (TPRH…VQIS). N-linked (GlcNAc...) asparagine glycosylation is present at Asn-50. Cys-53 and Cys-63 form a disulfide bridge. N-linked (GlcNAc...) asparagine glycans are attached at residues Asn-73, Asn-86, Asn-130, Asn-144, Asn-169, and Asn-188. Positions 244–248 (WSDWS) match the WSXWS motif motif. Residues Asn-330, Asn-368, Asn-374, Asn-401, Asn-463, and Asn-477 are each glycosylated (N-linked (GlcNAc...) asparagine). Residues 566-591 (RLSIIFASLGSFASVLLVGSLGYIGL) form a helical membrane-spanning segment. Topologically, residues 592–738 (NRAAWHLCPP…PGPPTLGQEA (147 aa)) are cytoplasmic. Residues 598–606 (LCPPLPTPC) carry the Box 1 motif motif.

It belongs to the type I cytokine receptor family. Type 2 subfamily. In terms of assembly, dimer or oligomer; disulfide-linked. Interacts with IL12RB2 to form the high affinity IL12 receptor. Heterodimer with IL23R; in presence of IL23. The heterodimer forms the IL23 receptor.

It localises to the membrane. Functions as an interleukin receptor which binds interleukin-12 with low affinity and is involved in IL12 transduction. Associated with IL12RB2 it forms a functional, high affinity receptor for IL12. Also associates with IL23R to form the interleukin-23 receptor which functions in IL23 signal transduction probably through activation of the Jak-Stat signaling cascade. The polypeptide is Interleukin-12 receptor subunit beta-1 (Il12rb1) (Mus musculus (Mouse)).